We begin with the raw amino-acid sequence, 33 residues long: Photosystem II reaction center protein Psb30 (33 aa).

The helical transmembrane segment at 5–25 threads the bilayer; that stretch reads LIVQLGSLTLITIAGPLIVAL.

This sequence belongs to the Psb30/Ycf12 family. PSII is composed of 1 copy each of membrane proteins PsbA, PsbB, PsbC, PsbD, PsbE, PsbF, PsbH, PsbI, PsbJ, PsbK, PsbL, PsbM, PsbT, PsbY, PsbZ, Psb30/Ycf12, peripheral proteins of the oxygen-evolving complex and a large number of cofactors. It forms dimeric complexes.

It localises to the plastid. The protein resides in the chloroplast thylakoid membrane. Its function is as follows. A core subunit of photosystem II (PSII), probably helps stabilize the reaction center. The chain is Photosystem II reaction center protein Psb30 from Euglena mutabilis.